The sequence spans 747 residues: Meprin A subunit alpha (747 aa).

The N-terminal stretch at 1-20 (MLWIQPACLLSLIFSAHIAA) is a signal peptide. The propeptide occupies 21-64 (VSIKHLLNGSDHDTDVGEQKDIFEINLAAGLNLFQGDILLPRTR). N-linked (GlcNAc...) asparagine glycosylation is found at Asn-28 and Asn-139. Positions 65-259 (NAMRDPSSRW…IRLNRMYNCT (195 aa)) constitute a Peptidase M12A domain. Topologically, residues 65-713 (NAMRDPSSRW…FYAGERCQAM (649 aa)) are extracellular. 3 cysteine pairs are disulfide-bonded: Cys-106/Cys-258, Cys-127/Cys-146, and Cys-268/Cys-430. His-154 contacts Zn(2+). The active site involves Glu-155. Residues His-158 and His-164 each coordinate Zn(2+). N-linked (GlcNAc...) asparagine glycans are attached at residues Asn-221, Asn-257, Asn-317, Asn-413, Asn-439, Asn-533, and Asn-540. Residues 263–432 (TLLDHCDFEK…ITLTETPCPA (170 aa)) form the MAM domain. The MATH domain maps to 433 to 594 (GVWTIRNISQ…GDSLIIFVDF (162 aa)). The tract at residues 638-663 (ESLPSSLGQRHPSRQKRSVENTGPME) is disordered. Positions 671-711 (FRDPCDPNPCQNEGTCVNVKGMASCRCVSGHAFFYAGERCQ) constitute an EGF-like domain. Disulfide bonds link Cys-675–Cys-686, Cys-680–Cys-695, and Cys-697–Cys-710. The chain crosses the membrane as a helical span at residues 714-741 (HVHGSLLGLLIGCIAGLIFLTFVTFSTT). Over 742 to 747 (NGKLRQ) the chain is Cytoplasmic.

In terms of assembly, homotetramer consisting of disulfide-linked alpha subunits, homooligomer consisting of disulfide-linked alpha subunit homodimers, or heterotetramer of two alpha and two beta subunits formed by non-covalent association of two disulfide-linked heterodimers. Genetic factors determine which oligomer(s) will be formed (strain-specific). Interacts with MBL2 through its carbohydrate moiety. This interaction may inhibit its catalytic activity. Zn(2+) serves as cofactor. N-glycosylated; contains GlcNAc, galactose, mannose and a small amount of fucose. Kidney, intestinal brush borders and salivary ducts.

Its subcellular location is the membrane. It carries out the reaction Hydrolysis of protein and peptide substrates preferentially on carboxyl side of hydrophobic residues.. Inhibited by metal ion chelators EDTA and 1,10-phenanthroline, bradykinin analogs, cysteine, CONA65, and several hydroxamate compounds, particularly tyrosine hydroxamate. Not inhibited by 3,4-dichloroisocourmarin, soybean trypsin inhibitor, or the cysteine proteinase inhibitors iodoacetic acid and E-64. The protein is Meprin A subunit alpha (Mep1a) of Mus musculus (Mouse).